Consider the following 1186-residue polypeptide: ATP-dependent helicase/deoxyribonuclease subunit B (1186 aa).

This sequence belongs to the helicase family. AddB/RexB type 2 subfamily. Heterodimer of AddA and RexB. The cofactor is Mg(2+).

Its function is as follows. The heterodimer acts as both an ATP-dependent DNA helicase and an ATP-dependent, dual-direction single-stranded exonuclease. Recognizes the chi site generating a DNA molecule suitable for the initiation of homologous recombination. This subunit has 5' -&gt; 3' nuclease activity but not helicase activity. This Latilactobacillus sakei subsp. sakei (strain 23K) (Lactobacillus sakei subsp. sakei) protein is ATP-dependent helicase/deoxyribonuclease subunit B.